A 442-amino-acid chain; its full sequence is Choline monooxygenase, chloroplastic (442 aa).

The N-terminal 58 residues, M1–K58, are a transit peptide targeting the chloroplast. Residues W123–I229 form the Rieske domain. Positions 165, 167, 184, and 187 each coordinate [2Fe-2S] cluster. H290 and H295 together coordinate Fe cation.

Belongs to the choline monooxygenase family. [2Fe-2S] cluster serves as cofactor. It depends on Fe cation as a cofactor. Mg(2+) is required as a cofactor.

It localises to the plastid. The protein resides in the chloroplast stroma. It carries out the reaction choline + 2 reduced [2Fe-2S]-[ferredoxin] + O2 + 2 H(+) = betaine aldehyde hydrate + 2 oxidized [2Fe-2S]-[ferredoxin] + H2O. It functions in the pathway amine and polyamine biosynthesis; betaine biosynthesis via choline pathway; betaine aldehyde from choline (monooxygenase route): step 1/1. In terms of biological role, catalyzes the first step of the osmoprotectant glycine betaine synthesis. The protein is Choline monooxygenase, chloroplastic (CMO) of Amaranthus tricolor (Joseph's coat).